A 257-amino-acid chain; its full sequence is Nuclear receptor subfamily 0 group B member 2 (257 aa).

One can recognise an NR LBD domain in the interval 16–257; it reads SRPAILYALL…GLLGDMLLLR (242 aa). Arg57 is subject to Symmetric dimethylarginine; by PRMT5.

It belongs to the nuclear hormone receptor family. NR0 subfamily. Interacts (via N-terminus) with NEUROD1 (via N-terminus and C-terminus). Interacts with ID2. Interacts with RORG, NFIL3, NR1D1 and BHLHE41. Heterodimer; efficient DNA binding requires dimerization with another bHLH protein. Interacts with RARA, RXRA, THRB, NR5A1, NR5A2, NR1I3, PPARA, PPARG and EID1. Interacts with HNF4A; the resulting heterodimer is transcriptionally inactive. Interacts with DDX3X; this interaction disrupts the interaction between HNF4 and NR0B2/SHP that forms inactive heterodimers and enhances the formation of active HNF4 homodimers. In terms of processing, arginine methylation by PRMT5 enhances repression activity of metabolic genes in liver in response to bile acid signaling, by increasing interaction with cofactors. Liver. Low levels of expression were detected in heart and pancreas.

It localises to the nucleus. Its subcellular location is the cytoplasm. In terms of biological role, transcriptional regulator that acts as a negative regulator of receptor-dependent signaling pathways. Specifically inhibits transactivation of the nuclear receptor with which it interacts. Inhibits transcriptional activity of NEUROD1 on E-box-containing promoter by interfering with the coactivation function of the p300/CBP-mediated transcription complex for NEUROD1. Essential component of the liver circadian clock which via its interaction with NR1D1 and RORG regulates NPAS2-mediated hepatic lipid metabolism. Regulates the circadian expression of cytochrome P450 (CYP) enzymes. Represses: NR5A2 and HNF4A to down-regulate CYP2C38, NFLI3 to up-regulate CYP2A5, BHLHE41/HNF1A axis to up-regulate CYP1A2, CYP2E1 and CYP3A11, and NR1D1 to up-regulate CYP2B10, CYP4A10 and CYP4A14. The polypeptide is Nuclear receptor subfamily 0 group B member 2 (NR0B2) (Homo sapiens (Human)).